The sequence spans 139 residues: Ribosome maturation factor RimP (139 aa).

It belongs to the RimP family.

It is found in the cytoplasm. In terms of biological role, required for maturation of 30S ribosomal subunits. In Syntrophomonas wolfei subsp. wolfei (strain DSM 2245B / Goettingen), this protein is Ribosome maturation factor RimP.